The chain runs to 1784 residues: Protein mel-28 (1784 aa).

Residues 1-956 are required for nuclear envelope and kinetochore localization; that stretch reads MDNENSSIFK…QNDDEDMPEV (956 aa). A required for association with mitotic chromosomes region spans residues 566-778; that stretch reads GKIEEFCQLA…TSPEDSEHSE (213 aa). An important for nuclear localization region spans residues 846 to 1071; the sequence is APMTVTIGKH…HNSILKTAKG (226 aa). Disordered regions lie at residues 945–994 and 1115–1784; these read KVQN…AKRI and ETMT…RAKQ. Basic and acidic residues predominate over residues 1126–1149; that stretch reads GKHDEEKDSEKNVVDEMEEVKDQE. 2 stretches are compositionally biased toward acidic residues: residues 1222 to 1232 and 1266 to 1278; these read LEEEGEDEDIW and VNEE…EEVQ. The interval 1239–1601 is chromatin binding; sequence FEVQMDEDCE…TTVDPSSSAL (363 aa). The segment covering 1279 to 1293 has biased composition (basic and acidic residues); the sequence is QDAKEPEKTEKRQEE. The span at 1297–1306 shows a compositional bias: low complexity; the sequence is EVMQPVIPEE. Residues 1321–1336 are compositionally biased toward acidic residues; it reads ELQEEPDIVPTGDEDT. Residues 1337–1351 are compositionally biased toward basic and acidic residues; the sequence is ADKVQEQAVEEDRPP. Residues 1352–1366 show a composition bias toward polar residues; sequence SRNTRSSSVQKSTSQ. Over residues 1367-1382 the composition is skewed to basic and acidic residues; the sequence is VEDRDPKELVEEERPP. Over residues 1383 to 1398 the composition is skewed to polar residues; it reads SRNTRSASVQKSSNQE. Basic and acidic residues predominate over residues 1428–1444; it reads KVKDQKPEELIEEDRPP. Residues 1445-1459 are compositionally biased toward polar residues; that stretch reads SRNTRSASAQKTVAA. Positions 1533 to 1546 are enriched in low complexity; it reads AAASTSSSRAGSVT. Residues 1566–1576 show a composition bias toward acidic residues; it reads VQEEEEEEAEE. Residues 1581-1606 are compositionally biased toward polar residues; it reads SRSTRSASVKNTTVDPSSSALASTKR. The important for nuclear localization stretch occupies residues 1601–1784; the sequence is LASTKRTTSR…LLRSARRAKQ (184 aa). A DNA-binding region (a.T hook 1) is located at residues 1630-1642; that stretch reads TPKRGRPAKKDAG. Residues 1630-1784 are required for chromosome segregation, nuclear growth, nucleoplasmic accumulation and cell cycle timing, but not required for nuclear envelope and kinetochore localization; the sequence is TPKRGRPAKK…LLRSARRAKQ (155 aa). The span at 1716-1735 shows a compositional bias: polar residues; that stretch reads AGTSKQSRSVTRSRASSIDV. The segment at residues 1746 to 1758 is a DNA-binding region (a.T hook 2); that stretch reads KRGRGRPPKTVLE.

As to expression, ubiquitously expressed (at protein level).

It is found in the nucleus. It localises to the nucleoplasm. The protein resides in the nucleus envelope. Its subcellular location is the nucleus inner membrane. The protein localises to the nuclear pore complex. It is found in the chromosome. It localises to the centromere. The protein resides in the kinetochore. In terms of biological role, nuclear envelope protein which has essential roles in assembly of nuclear pore complexes and in chromatin maintenance during the cell cycle. Appears to be a stable structural component of the nuclear envelope during interphase. In dividing cells, localizes to kinetochores during early stages of mitosis and then to chromatin during late mitosis. Important for several mitotic processes including chromosome condensation, kinetochore assembly, chromosome segregation and cell-cycle timing. In postmitotic cells, plays a role in the early steps of nuclear pore complex assembly by recruiting the nucleoporins npp-10 and npp-5 to chromatin. Also involved in meiotic chromosome segregation. May function downstream of the Ran GTPase signaling pathway. This is Protein mel-28 from Caenorhabditis elegans.